The primary structure comprises 426 residues: Metacaspase-1B (426 aa).

The segment covering 1-14 has biased composition (gly residues); it reads MSGYPGAGYNGGGY. The tract at residues 1 to 111 is disordered; the sequence is MSGYPGAGYN…QAPPPPPQAP (111 aa). Over residues 21–68 the composition is skewed to low complexity; sequence QYGGYYPPQPAYNAYQQPPPQQQQYMVYHQPSPGPQQHQHWNPQQQTP. Catalysis depends on residues His-217 and Cys-273.

It belongs to the peptidase C14B family.

Involved in cell death (apoptosis). This chain is Metacaspase-1B (casB), found in Neurospora crassa (strain ATCC 24698 / 74-OR23-1A / CBS 708.71 / DSM 1257 / FGSC 987).